We begin with the raw amino-acid sequence, 649 residues long: Serine/threonine kinase-like domain-containing protein STKLD1 (649 aa).

A compositionally biased stretch (basic and acidic residues) spans methionine 1 to glutamine 13. The tract at residues methionine 1 to glutamate 23 is disordered. A Protein kinase domain is found at tyrosine 28–leucine 379. ATP-binding positions include leucine 34 to asparagine 42 and lysine 57. The disordered stretch occupies residues phenylalanine 621 to glycine 640.

Belongs to the protein kinase superfamily. Ser/Thr protein kinase family. STKL subfamily.

In Macaca fascicularis (Crab-eating macaque), this protein is Serine/threonine kinase-like domain-containing protein STKLD1 (STKLD1).